The following is a 479-amino-acid chain: Anaerobic nitric oxide reductase flavorubredoxin (479 aa).

The segment at Leu30–Ile210 is zinc metallo-hydrolase. 6 residues coordinate Fe cation: His79, Glu81, Asp83, His147, Asp166, and His227. The Flavodoxin-like domain occupies Ile254–Ala393. FMN is bound by residues Thr260–Asn264 and Ala342–Leu369. In terms of domain architecture, Rubredoxin-like spans Gly423 to Leu474. Fe cation is bound by residues Cys428, Cys431, Cys461, and Cys464.

This sequence in the N-terminal section; belongs to the zinc metallo-hydrolase group 3 family. In terms of assembly, homotetramer. It depends on Fe cation as a cofactor. Requires FMN as cofactor.

It is found in the cytoplasm. The protein operates within nitrogen metabolism; nitric oxide reduction. In terms of biological role, anaerobic nitric oxide reductase; uses NADH to detoxify nitric oxide (NO), protecting several 4Fe-4S NO-sensitive enzymes. Has at least 2 reductase partners, only one of which (NorW, flavorubredoxin reductase) has been identified. NO probably binds to the di-iron center; electrons enter from the NorW at rubredoxin and are transferred sequentially to the FMN center and the di-iron center. Also able to function as an aerobic oxygen reductase. The sequence is that of Anaerobic nitric oxide reductase flavorubredoxin from Shigella flexneri serotype 5b (strain 8401).